The sequence spans 622 residues: UvrABC system protein C (622 aa).

In terms of domain architecture, GIY-YIG spans 12-91; sequence SSPGVYIMKD…IKKYRPKYNF (80 aa). Residues 201 to 236 enclose the UVR domain; it reads REILKIFRERMSAAAAAEKYEKAARFRDLIRSIEVT.

This sequence belongs to the UvrC family. In terms of assembly, interacts with UvrB in an incision complex.

Its subcellular location is the cytoplasm. The UvrABC repair system catalyzes the recognition and processing of DNA lesions. UvrC both incises the 5' and 3' sides of the lesion. The N-terminal half is responsible for the 3' incision and the C-terminal half is responsible for the 5' incision. The protein is UvrABC system protein C of Geotalea daltonii (strain DSM 22248 / JCM 15807 / FRC-32) (Geobacter daltonii).